The following is a 164-amino-acid chain: Transcription elongation factor GreA (164 aa).

Positions 50-75 (YHAAREEQGQQEARIRQLQDLLNIAK) form a coiled coil.

The protein belongs to the GreA/GreB family.

Its function is as follows. Necessary for efficient RNA polymerase transcription elongation past template-encoded arresting sites. The arresting sites in DNA have the property of trapping a certain fraction of elongating RNA polymerases that pass through, resulting in locked ternary complexes. Cleavage of the nascent transcript by cleavage factors such as GreA or GreB allows the resumption of elongation from the new 3'terminus. GreA releases sequences of 2 to 3 nucleotides. In Mycobacterium leprae (strain Br4923), this protein is Transcription elongation factor GreA.